Here is a 349-residue protein sequence, read N- to C-terminus: MTDPSRLVTPERRGDDLGDAALRPQNLSEFVGQQQARANLQVFIDAARKRKEALDHVLFVGPPGLGKTTLAQIVARELGVGFRATSGPVIAKAGDLAALLTNLEERDVLFIDEIHRLSPSVEEVLYPAMEDFQLDLIIGEGPAARSVKIDLSKFTLVGATTRAGLLTNPLRDRFGIPIRLNFYTIEELESIVTRGARVLGTPITADGANEIARRARGTPRIAGRLLRRVRDFASAADAEAIDRSIADHALGALEVDSAGLDAMDRRYLTTIALNYGGGPVGVETMAAALSEPRDAIEDIIEPYLIQCGYLQRTPRGRLLTDHAFRHLGLAAPSRDPAQFGLFGDTGDQE.

Residues Met-1–Tyr-183 are large ATPase domain (RuvB-L). ATP-binding positions include Leu-22, Arg-23, Gly-64, Lys-67, Thr-68, Thr-69, Glu-130–Phe-132, Arg-173, Tyr-183, and Arg-220. Thr-68 is a Mg(2+) binding site. Residues Thr-184 to Glu-254 form a small ATPAse domain (RuvB-S) region. Residues Ser-257–Glu-349 form a head domain (RuvB-H) region. The DNA site is built by Arg-293, Arg-312, and Arg-317.

The protein belongs to the RuvB family. Homohexamer. Forms an RuvA(8)-RuvB(12)-Holliday junction (HJ) complex. HJ DNA is sandwiched between 2 RuvA tetramers; dsDNA enters through RuvA and exits via RuvB. An RuvB hexamer assembles on each DNA strand where it exits the tetramer. Each RuvB hexamer is contacted by two RuvA subunits (via domain III) on 2 adjacent RuvB subunits; this complex drives branch migration. In the full resolvosome a probable DNA-RuvA(4)-RuvB(12)-RuvC(2) complex forms which resolves the HJ.

The protein localises to the cytoplasm. It catalyses the reaction ATP + H2O = ADP + phosphate + H(+). Functionally, the RuvA-RuvB-RuvC complex processes Holliday junction (HJ) DNA during genetic recombination and DNA repair, while the RuvA-RuvB complex plays an important role in the rescue of blocked DNA replication forks via replication fork reversal (RFR). RuvA specifically binds to HJ cruciform DNA, conferring on it an open structure. The RuvB hexamer acts as an ATP-dependent pump, pulling dsDNA into and through the RuvAB complex. RuvB forms 2 homohexamers on either side of HJ DNA bound by 1 or 2 RuvA tetramers; 4 subunits per hexamer contact DNA at a time. Coordinated motions by a converter formed by DNA-disengaged RuvB subunits stimulates ATP hydrolysis and nucleotide exchange. Immobilization of the converter enables RuvB to convert the ATP-contained energy into a lever motion, pulling 2 nucleotides of DNA out of the RuvA tetramer per ATP hydrolyzed, thus driving DNA branch migration. The RuvB motors rotate together with the DNA substrate, which together with the progressing nucleotide cycle form the mechanistic basis for DNA recombination by continuous HJ branch migration. Branch migration allows RuvC to scan DNA until it finds its consensus sequence, where it cleaves and resolves cruciform DNA. In Rhodopseudomonas palustris (strain TIE-1), this protein is Holliday junction branch migration complex subunit RuvB.